We begin with the raw amino-acid sequence, 232 residues long: Large ribosomal subunit protein uL1 (232 aa).

The protein belongs to the universal ribosomal protein uL1 family. In terms of assembly, part of the 50S ribosomal subunit.

Binds directly to 23S rRNA. The L1 stalk is quite mobile in the ribosome, and is involved in E site tRNA release. Its function is as follows. Protein L1 is also a translational repressor protein, it controls the translation of the L11 operon by binding to its mRNA. This Chlamydia trachomatis serovar L2b (strain UCH-1/proctitis) protein is Large ribosomal subunit protein uL1.